The primary structure comprises 269 residues: MIRKPAVAGYFYPSNRNELLSLISSFHVQQSEVSCQPIGVVVPHAGIVYSGRTAMYSYNALRNSSIRDFIIIGPNHRPMTPYASIFPSGSWETPLGNAIINEELASELYKNSQYIVKDEESHSVEHSIEVQIPFLQYMFGNSFTFVPVILGDQEKVVANDIASALMRLSKPYILIASSDFTHYERSDIVERKDMDLISRIVDLDIDGFYDTIERENVTACGYGAIAILMIIAKKIGAKISLLNHSNSGDVTNDYDEVVGYSSIVACRQI.

It belongs to the MEMO1 family.

In Thermoplasma volcanium (strain ATCC 51530 / DSM 4299 / JCM 9571 / NBRC 15438 / GSS1), this protein is MEMO1 family protein TV1383.